The primary structure comprises 97 residues: Integration host factor subunit alpha (97 aa).

It belongs to the bacterial histone-like protein family. As to quaternary structure, heterodimer of an alpha and a beta chain.

In terms of biological role, this protein is one of the two subunits of integration host factor, a specific DNA-binding protein that functions in genetic recombination as well as in transcriptional and translational control. This is Integration host factor subunit alpha from Colwellia psychrerythraea (strain 34H / ATCC BAA-681) (Vibrio psychroerythus).